The chain runs to 138 residues: Basic phospholipase A2 BP-I (138 aa).

The N-terminal stretch at 1 to 16 is a signal peptide; that stretch reads MRTLWIMAVLLLGVDG. Intrachain disulfides connect Cys-42–Cys-132, Cys-44–Cys-60, Cys-59–Cys-112, Cys-65–Cys-138, Cys-66–Cys-105, Cys-73–Cys-98, and Cys-91–Cys-103. Gly-45 and Gly-47 together coordinate Ca(2+). Residue His-63 is part of the active site. The active site involves Asp-106.

Belongs to the phospholipase A2 family. Group II subfamily. K49 sub-subfamily. Requires Ca(2+) as cofactor. In terms of tissue distribution, expressed by the venom gland.

It localises to the secreted. It catalyses the reaction a 1,2-diacyl-sn-glycero-3-phosphocholine + H2O = a 1-acyl-sn-glycero-3-phosphocholine + a fatty acid + H(+). Snake venom phospholipase A2 (PLA2) that has strong myotoxic activity with a low phospholipase A2 activity. PLA2 catalyzes the calcium-dependent hydrolysis of the 2-acyl groups in 3-sn-phosphoglycerides. This chain is Basic phospholipase A2 BP-I, found in Protobothrops flavoviridis (Habu).